The chain runs to 292 residues: General transcription factor IIE subunit 2 (292 aa).

M1 carries the N-acetylmethionine modification. The tract at residues 17–64 (LSTPVVEKRAVPSESPSSSSSKKKKAKVEHGGSSGSKQNSDHNNGSFN) is disordered. Residues 51–63 (GSKQNSDHNNGSF) show a composition bias toward polar residues. Residue S62 is modified to Phosphoserine. The segment at residues 67 to 147 (ALSGSSGYKF…YAFKPKYNLK (81 aa)) is a DNA-binding region (TFIIE beta). K75 carries the N6-acetyllysine modification. The interval 245–277 (SMQESGPKKVASIQRRKKPASQKKRRFKTHNEH) is disordered. A compositionally biased stretch (basic residues) spans 258-272 (QRRKKPASQKKRRFK).

Belongs to the TFIIE beta subunit family. As to quaternary structure, tetramer of two alpha and two beta chains. Interacts with FACT subunit SUPT16H. Interacts with ATF7IP. Interacts with SND1. Part of TBP-based Pol II pre-initiation complex (PIC), in which Pol II core assembles with general transcription factors and other specific initiation factors including GTF2E1, GTF2E2, GTF2F1, GTF2F2, TCEA1, ERCC2, ERCC3, GTF2H2, GTF2H3, GTF2H4, GTF2H5, GTF2A1, GTF2A2, GTF2B and TBP; this large multi-subunit PIC complex mediates DNA unwinding and targets Pol II core to the transcription start site where the first phosphodiester bond forms.

It localises to the nucleus. Functionally, recruits TFIIH to the initiation complex and stimulates the RNA polymerase II C-terminal domain kinase and DNA-dependent ATPase activities of TFIIH. Both TFIIH and TFIIE are required for promoter clearance by RNA polymerase. This chain is General transcription factor IIE subunit 2 (Gtf2e2), found in Mus musculus (Mouse).